The primary structure comprises 468 residues: Abscisic acid 8'-hydroxylase 4 (468 aa).

The helical transmembrane segment at 4 to 24 threads the bilayer; it reads IWFLVVPILILCLLLVRVIVS. Cys-415 contacts heme.

It belongs to the cytochrome P450 family. The cofactor is heme. Mainly expressed in flowers. Lower expression in siliques, rosette leaves, roots and stems. Not expressed in dry seeds. Expressed in silique envelopes, but not in embryo or endosperm during the seed development.

Its subcellular location is the membrane. The catalysed reaction is 2-cis-(+)-abscisate + reduced [NADPH--hemoprotein reductase] + O2 = (+)-8'-hydroxyabscisate + oxidized [NADPH--hemoprotein reductase] + H2O + H(+). It participates in plant hormone degradation; abscisic acid degradation. Involved in the oxidative degradation of abscisic acid, but not in the isomerization of the produced 8'-hydroxyabscisic acid (8'-OH-ABA) to (-)-phaseic acid (PA). The protein is Abscisic acid 8'-hydroxylase 4 (CYP707A4) of Arabidopsis thaliana (Mouse-ear cress).